We begin with the raw amino-acid sequence, 599 residues long: Beta-glucuronidase (599 aa).

D-glucuronate contacts are provided by D160 and N407. Catalysis depends on E408, which acts as the Proton donor. D-glucuronate is bound by residues N462, Y468, E501, W546, and K565. The active-site Nucleophile is E501. An N-K motif motif is present at residues 563–565 (NHK).

Belongs to the glycosyl hydrolase 2 family.

The enzyme catalyses a beta-D-glucuronoside + H2O = D-glucuronate + an alcohol. With respect to regulation, inhibited by a set of synthetic compounds like thio-urea derivatives and analogs. Inhibitors of gut microbial beta-glucuronidases are expected to block the reactivation of glucuronidated cancer drugs, and to alleviate drug-induced GI toxicity. Its function is as follows. Displays beta-glucuronidase activity with the artificial substrate p-nitrophenyl-beta-D-glucuronide (PNPG). Is likely capable of scavenging glucuronate from a range of chemically distinct xenobiotic and endobiotic glucuronides present in the gastrointestinal (GI) tract, to be able to utilize these diverse sources of carbon. As part of the GI microbiome, this enzyme would be able to reactivate glucuronide drug conjugates, such reactivated compounds can significantly damage the GI tract. The polypeptide is Beta-glucuronidase (Streptococcus agalactiae serotype V (strain ATCC BAA-611 / 2603 V/R)).